Consider the following 1077-residue polypeptide: MARLFSPRPPPSEDLFYETYYSLSQQYPLLILLLVIVLCALVALPAVAWASGRELTSDPSFLTTVLCALGGFSLLLGLASREQQLQRWTRPLSGLIWVALLALGYGFLFTGGVVSAWDQVSFFLFIIFTVYAMLPLGMRDAAAAGVISSLSHLLVLGLYLGWQPESQRALLPQLAANAVLFLCGNVVGAYHKALMERALRATFREALSSLHSRRRLDTEKKHQEHLLLSILPAYLAREMKAEIMARLQAGQRSRPENTNNFHSLYVKRHQGVSVLYADIVGFTRLASECSPKELVLMLNELFGKFDQIAKEHECMRIKILGDCYYCVSGLPLSLPDHAINCVRMGLDMCRAIRKLRVATGVDINMRVGVHSGSVLCGVIGLQKWQYDVWSHDVTLANHMEAGGVPGRVHITGATLALLAGAYAVERADTEHRDPYLRELGEPTYLVIDPRAEEEDEKGTAKGLLSSLEGHTMRPSLLMTRYLESWGAAKPFAHLSHLDSPVSTSTPLPEKAFSPQWSLDRSRTPRGLDDELDTGDAKFFQVIEQLNSQKQWKQSKDFNLLTLYFREKEMEKQYRLSALPAFKYYAACTFLVFLSNFTIQMLVTTRPPALIITYSITFLLFFLLLFVCFSEHLTKCVQKGPKMLHWLPALSVLVATRPGFRVALGTATILLVFTMAIASLLFLPVSSDCLFLASNVSSVTFNASWEMPGSLPLISIPLISIPYSMHCCVLGFLSCSLFLHMSFELKLLLLLLWLVASCSLFLHSHAWLSDCLIARLYQSPSDSRPGVLKEPKLMGAIYFFIFFFTLLVLARQNEYYCRLDFLWKKKLRQEREETETMENLTRLLLENVLPAHVAPQFIGQNRRNEDLYHQSYECVCVLFASVPDFKEFYSESNINHEGLECLRLLNEIIADFDELLSKPKFSGVEKIKTIGSTYMAATGLNATSGQDTQQDSERSCSHLGTMVEFAVALGSKLGVINKHSFNNFRLRVGLNHGPVVAGVIGAQKPQYDIWGNTVNVASRMESTGVLGKIQVTEETARALQSLGYTCYSRGSIKVKGKGELCTYFLNTDLTRTGSPSAS.

Residues 1–28 (MARLFSPRPPPSEDLFYETYYSLSQQYP) lie on the Cytoplasmic side of the membrane. The next 6 helical transmembrane spans lie at 29–50 (LLILLLVIVLCALVALPAVAWA), 61–80 (FLTTVLCALGGFSLLLGLAS), 94–117 (GLIWVALLALGYGFLFTGGVVSAW), 120–138 (VSFFLFIIFTVYAMLPLGM), 141–162 (AAAAGVISSLSHLLVLGLYLGW), and 170–190 (LLPQLAANAVLFLCGNVVGAY). Residues 191-582 (HKALMERALR…YRLSALPAFK (392 aa)) lie on the Cytoplasmic side of the membrane. The Mg(2+) site is built by aspartate 278, isoleucine 279, and aspartate 322. ATP is bound by residues 278–283 (DIVGFT), 320–322 (LGD), and arginine 366. Residues 503–524 (TSTPLPEKAFSPQWSLDRSRTP) are disordered. Serine 517 carries the phosphoserine modification. Threonine 533 carries the phosphothreonine modification. 3 helical membrane passes run 583–604 (YYAACTFLVFLSNFTIQMLVTT), 608–630 (ALIITYSITFLLFFLLLFVCFSE), and 661–684 (VALGTATILLVFTMAIASLLFLPV). The Extracellular segment spans residues 685-717 (SSDCLFLASNVSSVTFNASWEMPGSLPLISIPL). N-linked (GlcNAc...) asparagine glycosylation is found at asparagine 694 and asparagine 701. 3 helical membrane-spanning segments follow: residues 718 to 738 (ISIPYSMHCCVLGFLSCSLFL), 746 to 766 (LLLLLLWLVASCSLFLHSHAW), and 793 to 809 (MGAIYFFIFFFTLLVLA). The Cytoplasmic segment spans residues 810–1077 (RQNEYYCRLD…LTRTGSPSAS (268 aa)). ATP contacts are provided by residues lysine 927, 1007–1009 (DIW), 1014–1018 (NVASR), and lysine 1054.

It belongs to the adenylyl cyclase class-4/guanylyl cyclase family. The cofactor is Mg(2+). Mn(2+) serves as cofactor.

The protein resides in the cell membrane. The protein localises to the cytoplasm. It carries out the reaction ATP = 3',5'-cyclic AMP + diphosphate. Activated by forskolin. Insensitive to calcium/calmodulin. Stimulated by GNAS and by the G-protein beta and gamma subunit complex. Functionally, catalyzes the formation of the signaling molecule cAMP in response to G-protein signaling. The chain is Adenylate cyclase type 4 (Adcy4) from Mus musculus (Mouse).